Reading from the N-terminus, the 183-residue chain is Ferritin light chain 1 (183 aa).

In terms of domain architecture, Ferritin-like diiron spans 7-156; it reads QNYSTEVEAA…NHLTNLRRVA (150 aa). Fe cation contacts are provided by glutamate 54, glutamate 57, glutamate 58, glutamate 61, and glutamate 64.

This sequence belongs to the ferritin family. In terms of assembly, oligomer of 24 subunits. There are two types of subunits: L (light) chain and H (heavy) chain. The major chain can be light or heavy, depending on the species and tissue type. The functional molecule forms a roughly spherical shell with a diameter of 12 nm and contains a central cavity into which the insoluble mineral iron core is deposited. Interacts with NCOA4. In terms of tissue distribution, in rat liver, the light chain is the major chain.

It localises to the cytoplasmic vesicle. It is found in the autophagosome. The protein resides in the cytoplasm. Its subcellular location is the autolysosome. Its function is as follows. Stores iron in a soluble, non-toxic, readily available form. Important for iron homeostasis. Iron is taken up in the ferrous form and deposited as ferric hydroxides after oxidation. Also plays a role in delivery of iron to cells. Mediates iron uptake in capsule cells of the developing kidney. Delivery to lysosomes by the cargo receptor NCOA4 for autophagic degradation and release or iron. This is Ferritin light chain 1 (Ftl1) from Rattus norvegicus (Rat).